Reading from the N-terminus, the 303-residue chain is Tyrosine recombinase XerC (303 aa).

One can recognise a Core-binding (CB) domain in the interval 1-85 (MRADLDAFLE…ATRGLYQYLL (85 aa)). The Tyr recombinase domain maps to 106–285 (KLPRTLDADR…DFQHLASVYD (180 aa)). Residues arginine 146, lysine 170, histidine 237, arginine 240, and histidine 263 contribute to the active site. Tyrosine 272 acts as the O-(3'-phospho-DNA)-tyrosine intermediate in catalysis.

The protein belongs to the 'phage' integrase family. XerC subfamily. Forms a cyclic heterotetrameric complex composed of two molecules of XerC and two molecules of XerD.

The protein localises to the cytoplasm. Site-specific tyrosine recombinase, which acts by catalyzing the cutting and rejoining of the recombining DNA molecules. The XerC-XerD complex is essential to convert dimers of the bacterial chromosome into monomers to permit their segregation at cell division. It also contributes to the segregational stability of plasmids. The chain is Tyrosine recombinase XerC from Pseudomonas aeruginosa (strain LESB58).